Consider the following 525-residue polypeptide: GMP synthase [glutamine-hydrolyzing] (525 aa).

The region spanning 9-207 (RILILDFGSQ…VLDICGCDAL (199 aa)) is the Glutamine amidotransferase type-1 domain. Residue C86 is the Nucleophile of the active site. Residues H181 and E183 contribute to the active site. Positions 208 to 400 (WTSAAIIEDT…LGLPYDMLYR (193 aa)) constitute a GMPS ATP-PPase domain. 235–241 (SGGVDSS) lines the ATP pocket.

As to quaternary structure, homodimer.

The enzyme catalyses XMP + L-glutamine + ATP + H2O = GMP + L-glutamate + AMP + diphosphate + 2 H(+). It participates in purine metabolism; GMP biosynthesis; GMP from XMP (L-Gln route): step 1/1. Functionally, catalyzes the synthesis of GMP from XMP. The chain is GMP synthase [glutamine-hydrolyzing] from Proteus mirabilis (strain HI4320).